The following is a 448-amino-acid chain: MSNESFPETLENLLSTLQTKQQNAIQSEVIEWLHSFCETFHLKIHCHKQFIPSGEKKRAKIPAQEIQGNTQPSHHVHRVVLSRAQPVKAQESLLTTMCNGLVLDANTWTCLAIPPPAPFQQATRQVQHFYRNNFYEVVPIQDGTLLTIYYWDDPEHGPSWCLASTHGYDVSNYCWIGDKTFAELVYELLQQHSTCDVTLEKNKTRGTRLFFNNLNPDYCYTIGIRHHNLQPLIYDPQNIWAIQSTNLKTLKTVYPEYYGYIGIPGIQSQVPELPQYDLPYLIRSYKTAMNQAKNAIKNGKKDKEYFNYGYLLISRAPAITKSTSNVLLKSPLLVFLQKSVYQKKHNISNSQRLEFIILQNYLMQHFRDHFIALFPQYISYYTKYQNMLNMIIHSIATKDKDHPFAGAVVKKVLEDIENAENIIDHTTIQNYAHQSKYAMLYLSIISHF.

This sequence belongs to the asfivirus M448R family.

The protein localises to the virion. The chain is Putative RNA-ligase from Ornithodoros (relapsing fever ticks).